The chain runs to 111 residues: Large ribosomal subunit protein eL42 (111 aa).

Residues Cys-12, Cys-15, Cys-72, and Cys-77 each coordinate Zn(2+).

The protein belongs to the eukaryotic ribosomal protein eL42 family. Component of the large ribosomal subunit.

The protein resides in the cytoplasm. Its function is as follows. Component of the large ribosomal subunit. The ribosome is a large ribonucleoprotein complex responsible for the synthesis of proteins in the cell. In Oryctolagus cuniculus (Rabbit), this protein is Large ribosomal subunit protein eL42 (RPL36A).